Here is a 451-residue protein sequence, read N- to C-terminus: Uronate isomerase (451 aa).

This sequence belongs to the metallo-dependent hydrolases superfamily. Uronate isomerase family.

It carries out the reaction D-glucuronate = D-fructuronate. The catalysed reaction is aldehydo-D-galacturonate = keto-D-tagaturonate. It functions in the pathway carbohydrate metabolism; pentose and glucuronate interconversion. This Thermotoga neapolitana (strain ATCC 49049 / DSM 4359 / NBRC 107923 / NS-E) protein is Uronate isomerase.